The chain runs to 443 residues: SAM50-like protein CG7639 (443 aa).

Positions 23 to 101 (ARVDRVNVSG…QGYEVTFKGN (79 aa)) constitute a POTRA domain.

This sequence belongs to the SAM50/omp85 family. Associates with the mitochondrial contact site and cristae organizing system (MICOS) complex (also known as MINOS or MitOS complex).

Its subcellular location is the mitochondrion outer membrane. Its function is as follows. May play a role in the maintenance of the structure of mitochondrial cristae. This is SAM50-like protein CG7639 from Drosophila melanogaster (Fruit fly).